The chain runs to 259 residues: 14-3-3-like protein GF14 omega (259 aa).

Phosphoserine occurs at positions 67, 109, and 190. Position 211 is a phosphothreonine (threonine 211).

The protein belongs to the 14-3-3 family. In terms of assembly, interacts with CINV1.

It is found in the nucleus. The protein resides in the cytoplasm. Its function is as follows. Is associated with a DNA binding complex that binds to the G box, a well-characterized cis-acting DNA regulatory element found in plant genes. The polypeptide is 14-3-3-like protein GF14 omega (GRF2) (Arabidopsis thaliana (Mouse-ear cress)).